Consider the following 310-residue polypeptide: Homoserine kinase (310 aa).

Residue 91-101 (PIGSGLGSSAC) coordinates ATP.

The protein belongs to the GHMP kinase family. Homoserine kinase subfamily.

It is found in the cytoplasm. It carries out the reaction L-homoserine + ATP = O-phospho-L-homoserine + ADP + H(+). Its pathway is amino-acid biosynthesis; L-threonine biosynthesis; L-threonine from L-aspartate: step 4/5. In terms of biological role, catalyzes the ATP-dependent phosphorylation of L-homoserine to L-homoserine phosphate. The protein is Homoserine kinase of Sodalis glossinidius (strain morsitans).